The sequence spans 426 residues: C2H2 type master regulator of conidiophore development brlA (426 aa).

Disordered stretches follow at residues 25–71 and 281–302; these read CPSM…DRGT and GVRLQRQPSRKMARKQPSKQSL. Residues 30-44 show a composition bias toward low complexity; that stretch reads SSFSPLESPTPTPTS. Positions 45–58 are enriched in polar residues; the sequence is IYSQGSLASPSWPE. Basic residues predominate over residues 288-297; it reads PSRKMARKQP. C2H2-type zinc fingers lie at residues 316–340 and 346–371; these read FKCKEPGCKGRFKRQEHLKRHMKSH and HVCWVPGCHRAFSRSDNLNAHYTKTH. The interval 384 to 426 is disordered; that stretch reads LDETSPDYNPDYRGPLTADGRPMPGGTLDESMPSREISMEWDE.

The protein localises to the nucleus. Its function is as follows. BrlA, abaA and wetA are pivotal regulators of conidiophore development and conidium maturation. They act individually and together to regulate their own expression and that of numerous other sporulation-specific genes. Binds promoters of target genes at brlA response elements (BREs) containing the conserved sequence 5'-(C/A)(A/G)AGGG(G/A)-3'. Positively regulates expression of the gliotoxin biosynthetic gene cluster in actively growing vegetative cells, and likely bridges morphological and chemical development during the life-cycle. Regulates (directly or indirectly) the ergot cluster genes. Positively regulates expression of the fumiquinazoline C biosynthetic gene cluster. Positively regulates expression of the melanin biosynthetic gene cluster. Mediates repression of ribosomal protein gene expression in response to nitrogen depletion. The polypeptide is C2H2 type master regulator of conidiophore development brlA (Aspergillus fumigatus (strain ATCC MYA-4609 / CBS 101355 / FGSC A1100 / Af293) (Neosartorya fumigata)).